The following is a 208-amino-acid chain: Pyrrolidone-carboxylate peptidase (208 aa).

Residues Glu-79, Cys-142, and His-166 contribute to the active site.

The protein belongs to the peptidase C15 family. As to quaternary structure, homotetramer made of two disulfide-linked dimers.

The protein resides in the cytoplasm. The catalysed reaction is Release of an N-terminal pyroglutamyl group from a polypeptide, the second amino acid generally not being Pro.. Removes 5-oxoproline from various penultimate amino acid residues except L-proline. The polypeptide is Pyrrolidone-carboxylate peptidase (pcp) (Pyrococcus furiosus (strain ATCC 43587 / DSM 3638 / JCM 8422 / Vc1)).